Consider the following 276-residue polypeptide: A-factor receptor protein (276 aa).

The 61-residue stretch at 8–68 (VQTWRSIVDA…AIMDEQTSTV (61 aa)) folds into the HTH tetR-type domain. A DNA-binding region (H-T-H motif) is located at residues 31 to 50 (AISEILRRAKVTKGALYFHF). Positions 207–220 (EKAEREEQEARIAA) are enriched in basic and acidic residues. The interval 207–276 (EKAEREEQEA…AGVAAGGVVA (70 aa)) is disordered. A compositionally biased stretch (low complexity) spans 221-235 (EAKGAGSDAATDSGS). The segment covering 236–257 (RSGGSGLRGGGSGRGPRAGGAG) has biased composition (gly residues).

Homodimer or multimer. Binds to both DNA and A-factor as a homodimer.

The protein resides in the cytoplasm. In terms of biological role, represses adpA expression by binding to the promoter region in the absence of A-factor, causing repression of streptomycin production and of sporulation. The protein is A-factor receptor protein (arpA) of Streptomyces griseus.